A 1125-amino-acid chain; its full sequence is Transient receptor potential cation channel subfamily A member 1 (1125 aa).

Topologically, residues methionine 1–histidine 721 are cytoplasmic. ANK repeat units follow at residues glutamate 63–isoleucine 94, tyrosine 98–leucine 127, asparagine 131–leucine 161, asparagine 165–lysine 194, tryptophan 198–tyrosine 227, lysine 239–methionine 268, alanine 272–aspartate 301, asparagine 309–serine 338, and glutamate 342–isoleucine 371. 5 disulfide bridges follow: cysteine 193–cysteine 666, cysteine 463–cysteine 666, cysteine 609–cysteine 622, cysteine 622–cysteine 666, and cysteine 634–cysteine 859. Proline 395 is modified (4-hydroxyproline; transient). ANK repeat units follow at residues aspartate 413 to serine 442, aspartate 446 to leucine 475, histidine 482 to serine 511, asparagine 514 to aspartate 543, and glutamate 548 to leucine 577. (E)-cinnamaldehyde-binding residues include cysteine 415 and cysteine 422. Cysteine 622 lines the (E)-cinnamaldehyde pocket. A Cysteine sulfenic acid (-SOH); transient; in hyperoxia modification is found at cysteine 634. Cysteine 642, cysteine 666, and lysine 712 together coordinate (E)-cinnamaldehyde. Residues methionine 722–isoleucine 742 traverse the membrane as a helical segment. The Extracellular segment spans residues glutamine 743 to threonine 767. Asparagine 749 and asparagine 755 each carry an N-linked (GlcNAc...) asparagine glycan. The chain crosses the membrane as a helical span at residues leucine 768 to tyrosine 788. The Cytoplasmic segment spans residues cysteine 789 to tyrosine 806. Positions 791, 794, 808, and 811 each coordinate Ca(2+). The chain crosses the membrane as a helical span at residues asparagine 807 to leucine 827. The Extracellular portion of the chain corresponds to asparagine 828 to tyrosine 832. Residues methionine 833–leucine 853 traverse the membrane as a helical segment. At glutamine 854–serine 876 the chain is on the cytoplasmic side. Cysteine 859 carries the cysteine sulfenic acid (-SOH); transient; in hyperoxia modification. Residues threonine 877 to phenylalanine 897 traverse the membrane as a helical segment. Residues glutamine 898–proline 904 are Extracellular-facing. The segment at residues leucine 905–phenylalanine 925 is an intramembrane region (pore-forming). Over leucine 926–proline 937 the chain is Extracellular. The chain crosses the membrane as a helical span at residues valine 938–leucine 959. Residues isoleucine 960 to phenylalanine 1125 are Cytoplasmic-facing. Residues methionine 1044–lysine 1073 are a coiled coil. Lysine 1048–lysine 1054 provides a ligand contact to a 1,2-diacyl-sn-glycero-3-phospho-(1D-myo-inositol).

It belongs to the transient receptor (TC 1.A.4) family. Homotetramer. Interacts with TMEM100. Interacts with EGLN1. Interacts with the scorpion wasabi receptor toxin at the same site that electrophiles but in a non-covalent manner. Post-translationally, TRPA1 activation by electrophiles occurs though covalent modification of specific cysteine residues in the N-terminal cytoplasmic domain. Hydroxylation is required for TRPA1 activity inhibition in normoxia. In hypoxia, the decrease in oxygen concentration diminishes the activity of the hydroxylase EGLN1, thus relieving TRPA1 from inhibition and ultimately leading to channel activation. In terms of processing, oxidation of Cys-634 and Cys-859 in hyperoxia may override the hydroxylase EGLN1-mediated inhibition, causing TRPA1 activation. In terms of tissue distribution, expressed in inner ear (at protein level). Specifically expressed in a subset of nociceptive neurons. Expressed in the same neurons that TRPV1. In contrast, it is not expressed in neurons expressing TRPM8. Expressed in the superior cervical ganglion of vagus nerve. Expressed in the inferior ganglion (nodose ganglion) of vagus nerve. Expressed in dorsal root ganglia neurons.

It is found in the cell membrane. The catalysed reaction is Ca(2+)(in) = Ca(2+)(out). The enzyme catalyses Mg(2+)(in) = Mg(2+)(out). It catalyses the reaction Na(+)(in) = Na(+)(out). It carries out the reaction K(+)(in) = K(+)(out). The catalysed reaction is Zn(2+)(in) = Zn(2+)(out). With respect to regulation, electrophilic ligands activate the channel by covalent modification of intracellular cysteines. Cys-622 plays a key role in covalent binding of electrophiles. Extracellular Ca(2+) both potentiates and inactivates TRPA1; a rapid potentiation follows by slow desensitization. Activated by increase in intracellular Ca(2+) concentration. Inhibited by the potent blocker of TRPV channels ruthenium red, A-967079. Activated by icilin, sulfhydryl reactive agent MTSEA, N-methyl maleimide (NMM), and PF-4840154. Also activated by hyperoxia. Activated by intracellular Zn(2+). TRPA1 activation may critically depend on the presence of small intracellular compounds such as polyphosphates. Functionally, ligand-activated Ca(2+)-permeable, nonselective cation channel. Involved in pain detection and possibly also in cold perception, oxygen concentration perception, cough, itch, and inner ear function. Has a relatively high Ca(2+) selectivity, with a preference for divalent over monovalent cations (Ca(2+) &gt; Ba(2+) &gt; Mg(2+) &gt; NH4(+) &gt; Li(+) &gt; K(+)), the influx of cation into the cytoplasm, leads to membrane depolarization. Has a central role in the pain response to endogenous inflammatory mediators, such as bradykinin and to a diverse array of irritants. Activated by a large variety of structurally unrelated electrophilic and non-electrophilic chemical compounds, such as allylthiocyanate (AITC) from mustard oil or wasabi, cinnamaldehyde, diallyl disulfide (DADS) from garlic, and acrolein, an environmental irritant. Electrophilic ligands activate TRPA1 by interacting with critical N-terminal Cys residues in a covalent manner. Non-electrophile agonists bind at distinct sites in the transmembrane domain to promote channel activation. Also acts as an ionotropic cannabinoid receptor by being activated by delta(9)-tetrahydrocannabinol (THC), the psychoactive component of marijuana. May be a component for the mechanosensitive transduction channel of hair cells in inner ear, thereby participating in the perception of sounds. In Mus musculus (Mouse), this protein is Transient receptor potential cation channel subfamily A member 1.